The chain runs to 374 residues: Trichodiene synthase (374 aa).

The Mg(2+) site is built by Asp-100, Glu-164, Asn-225, Ser-229, Glu-233, Asp-239, and Ile-241. Positions 100 to 104 (DDSKD) are aspartate-rich domain.

The protein belongs to the trichodiene synthase family. The cofactor is Mg(2+). Mn(2+) serves as cofactor.

The enzyme catalyses (2E,6E)-farnesyl diphosphate = trichodiene + diphosphate. The protein operates within sesquiterpene biosynthesis; trichothecene biosynthesis. Its activity is regulated as follows. Benzyl triethylammonium cation (BTAC) acts as a competitive inhibitor of trichodiene synthase reaction in the presence of pyrophosphate (PPi). Functionally, trichodiene synthase; part of the core gene cluster that mediates the biosynthesis of trichothecenes, a very large family of chemically related bicyclic sesquiterpene compounds acting as mycotoxins, including T2-toxin. The biosynthesis of trichothecenes begins with the cyclization of farnesyl diphosphate to trichodiene and is catalyzed by the trichodiene synthase TRI5. Trichodiene undergoes a series of oxygenations catalyzed by the cytochrome P450 monooxygenase TRI4. TRI4 controls the addition of four oxygens at C-2, C-3, C-11, and the C-12, C-13-epoxide to form the intermediate isotrichotriol. Isotrichotriol then undergoes a non-enzymatic isomerization and cyclization to form isotrichodermol. During this process, the oxygen at the C-2 position becomes the pyran ring oxygen and the hydroxyl group at C-11 is lost. More complex type A trichothecenes are built by modifying isotrichodermol through a series of paired hydroxylation and acetylation or acylation steps. Isotrichodermol is converted to isotrichodermin by the acetyltransferase TRI101. TRI101 encodes a C-3 transacetylase that acts as a self-protection or resistance factor during biosynthesis and that the presence of a free C-3 hydroxyl group is a key component of Fusarium trichothecene phytotoxicity. A second hydroxyl group is added to C-15 by the trichothecene C-15 hydroxylase TRI11, producing 15-decalonectrin, which is then acetylated by TRI3, producing calonectrin. A third hydroxyl group is added at C-4 by the cytochrome P450 monooxygenase TRI13, converting calonectrin to 3,15-diacetoxyspirpenol, which is subsequently acetylated by the acetyltransferase TRI7. A fourth hydroxyl group is added to C-8 by the cytochrome P450 monooxygenase TRI1, followed by the addition of an isovaleryl moiety by TRI16. Finally, the acetyl group is removed from the C-3 position by the trichothecene C-3 esterase TRI8 to produce T-2 toxin. This chain is Trichodiene synthase, found in Fusarium sporotrichioides.